The following is a 220-amino-acid chain: Zip homologous protein 1 (220 aa).

Residues 6-44 form an RING-type zinc finger; it reads CNGCGCSPSKRQFFITACSHVFCETCRTTPTADFCHLCK. The stretch at 124 to 155 forms a coiled coil; the sequence is LTSFEENNRKKLEDIERENEKLRNLISALELK. Disordered stretches follow at residues 166-186 and 201-220; these read EFFMQGTPTSSNPSVAGSDVD and RSDSSSSNCSSQSNRGGSLF. A compositionally biased stretch (polar residues) spans 171-180; that stretch reads GTPTSSNPSV.

In terms of assembly, interacts with zhp-2; the interaction is required for their chromosome association and stability. As to expression, expressed in the germline.

It is found in the chromosome. Its function is as follows. Recruited co-dependently with zhp-2 to the synaptonemal complex between homologous chromosome pairs to regulate the formation and number of crossover events between homologs during meiotic recombination. Together with zhp-2, promotes the accumulation of pro-crossover proteins, including zhp-3 and zhp-4, at a designated crossover site along the recombination intermediate. Limits the number of crossover sites along a recombination intermediate by restricting the association of these pro-crossover proteins with other recombination sites during late prophase. Also, together with zhp-2, plays a role in chromosome remodeling following crossover formation to promote two successive rounds of chromosome segregation during meiosis. This Caenorhabditis elegans protein is Zip homologous protein 1.